We begin with the raw amino-acid sequence, 283 residues long: Protein/nucleic acid deglycase HchA (283 aa).

Residues H86, E91, and H123 each coordinate Zn(2+). C185 serves as the catalytic Nucleophile.

It belongs to the peptidase C56 family. HchA subfamily. As to quaternary structure, homodimer.

Its subcellular location is the cytoplasm. It carries out the reaction N(omega)-(1-hydroxy-2-oxopropyl)-L-arginyl-[protein] + H2O = lactate + L-arginyl-[protein] + H(+). The enzyme catalyses N(6)-(1-hydroxy-2-oxopropyl)-L-lysyl-[protein] + H2O = lactate + L-lysyl-[protein] + H(+). The catalysed reaction is S-(1-hydroxy-2-oxopropyl)-L-cysteinyl-[protein] + H2O = lactate + L-cysteinyl-[protein] + H(+). It catalyses the reaction N(omega)-(1-hydroxy-2-oxoethyl)-L-arginyl-[protein] + H2O = L-arginyl-[protein] + glycolate + H(+). It carries out the reaction N(6)-(1-hydroxy-2-oxoethyl)-L-lysyl-[protein] + H2O = glycolate + L-lysyl-[protein] + H(+). The enzyme catalyses S-(1-hydroxy-2-oxoethyl)-L-cysteinyl-[protein] + H2O = glycolate + L-cysteinyl-[protein] + H(+). The catalysed reaction is N(2)-(1-hydroxy-2-oxopropyl)-dGTP + H2O = lactate + dGTP + H(+). It catalyses the reaction N(2)-(1-hydroxy-2-oxopropyl)-GTP + H2O = lactate + GTP + H(+). It carries out the reaction N(2)-(1-hydroxy-2-oxopropyl)-GDP + H2O = lactate + GDP + H(+). The enzyme catalyses N(2)-(1-hydroxy-2-oxopropyl)-GMP + H2O = lactate + GMP + H(+). The catalysed reaction is N(2)-(1-hydroxy-2-oxoethyl)-dGTP + H2O = dGTP + glycolate + H(+). It catalyses the reaction N(2)-(1-hydroxy-2-oxoethyl)-GTP + H2O = glycolate + GTP + H(+). It carries out the reaction N(2)-(1-hydroxy-2-oxoethyl)-GDP + H2O = glycolate + GDP + H(+). The enzyme catalyses N(2)-(1-hydroxy-2-oxoethyl)-GMP + H2O = glycolate + GMP + H(+). The catalysed reaction is an N(2)-(1-hydroxy-2-oxopropyl)-guanosine in RNA + H2O = a guanosine in RNA + lactate + H(+). It catalyses the reaction an N(2)-(1-hydroxy-2-oxopropyl)-2'-deoxyguanosine in DNA + H2O = a 2'-deoxyguanosine in DNA + lactate + H(+). It carries out the reaction an N(2)-(1-hydroxy-2-oxoethyl)-guanosine in RNA + H2O = a guanosine in RNA + glycolate + H(+). The enzyme catalyses an N(2)-(1-hydroxy-2-oxoethyl)-2'-deoxyguanosine in DNA + H2O = a 2'-deoxyguanosine in DNA + glycolate + H(+). Functionally, protein and nucleotide deglycase that catalyzes the deglycation of the Maillard adducts formed between amino groups of proteins or nucleotides and reactive carbonyl groups of glyoxals. Thus, functions as a protein deglycase that repairs methylglyoxal- and glyoxal-glycated proteins, and releases repaired proteins and lactate or glycolate, respectively. Deglycates cysteine, arginine and lysine residues in proteins, and thus reactivates these proteins by reversing glycation by glyoxals. Acts on early glycation intermediates (hemithioacetals and aminocarbinols), preventing the formation of Schiff bases and advanced glycation endproducts (AGE). Also functions as a nucleotide deglycase able to repair glycated guanine in the free nucleotide pool (GTP, GDP, GMP, dGTP) and in DNA and RNA. Is thus involved in a major nucleotide repair system named guanine glycation repair (GG repair), dedicated to reversing methylglyoxal and glyoxal damage via nucleotide sanitization and direct nucleic acid repair. Plays an important role in protecting cells from carbonyl stress. This is Protein/nucleic acid deglycase HchA from Escherichia coli O8 (strain IAI1).